A 342-amino-acid chain; its full sequence is DNA primase (342 aa).

Residues Cys-37, Cys-40, Cys-65, and Cys-68 each contribute to the Zn(2+) site.

It belongs to the Tequatrovirus DNA primase family. Monomer. Hexamer. Interacts with the DnaB-like replicative helicase; this interaction forms the active primosome complex, which is composed of 6 helicase and 1 primase subunits and expresses full helicase and primase activities. Interacts (via C-terminus) with the single-stranded DNA-binding protein. Part of the replicase complex that includes the DNA polymerase, the polymerase clamp, the clamp loader complex, the single-stranded DNA binding protein, the primase, the DnaB-like replicative helicase and the helicase assembly factor.

Functionally, synthesizes short RNA primers for the lagging strand DNA replication. The primase synthesizes short RNA primers on the lagging strand that the polymerase elongates using dNTPs. Recognizes two trinucleotide sequences 5'-GTT-3' and 5'-GCT-3' in vitro, but uses only the first as the priming site in vivo. The polypeptide is DNA primase (61) (Escherichia coli (Bacteriophage T4)).